Reading from the N-terminus, the 135-residue chain is Large ribosomal subunit protein bL17 (135 aa).

This sequence belongs to the bacterial ribosomal protein bL17 family. In terms of assembly, part of the 50S ribosomal subunit. Contacts protein L32.

The sequence is that of Large ribosomal subunit protein bL17 from Listeria innocua serovar 6a (strain ATCC BAA-680 / CLIP 11262).